Reading from the N-terminus, the 517-residue chain is Crotonobetaine/carnitine--CoA ligase (517 aa).

The protein belongs to the ATP-dependent AMP-binding enzyme family.

It carries out the reaction 4-(trimethylamino)butanoate + ATP + CoA = 4-(trimethylamino)butanoyl-CoA + AMP + diphosphate. It catalyses the reaction crotonobetaine + ATP + CoA = crotonobetainyl-CoA + AMP + diphosphate. The enzyme catalyses (R)-carnitine + ATP + CoA = (R)-carnitinyl-CoA + AMP + diphosphate. Its pathway is amine and polyamine metabolism; carnitine metabolism. In terms of biological role, catalyzes the transfer of CoA to carnitine, generating the initial carnitinyl-CoA needed for the CaiB reaction cycle. Also has activity toward crotonobetaine and gamma-butyrobetaine. In Escherichia coli O157:H7, this protein is Crotonobetaine/carnitine--CoA ligase.